The primary structure comprises 145 residues: D-aminoacyl-tRNA deacylase (145 aa).

Residues 137 to 138 carry the Gly-cisPro motif, important for rejection of L-amino acids motif; it reads GP.

It belongs to the DTD family. Homodimer.

The protein localises to the cytoplasm. The catalysed reaction is glycyl-tRNA(Ala) + H2O = tRNA(Ala) + glycine + H(+). It carries out the reaction a D-aminoacyl-tRNA + H2O = a tRNA + a D-alpha-amino acid + H(+). Its function is as follows. An aminoacyl-tRNA editing enzyme that deacylates mischarged D-aminoacyl-tRNAs. Also deacylates mischarged glycyl-tRNA(Ala), protecting cells against glycine mischarging by AlaRS. Acts via tRNA-based rather than protein-based catalysis; rejects L-amino acids rather than detecting D-amino acids in the active site. By recycling D-aminoacyl-tRNA to D-amino acids and free tRNA molecules, this enzyme counteracts the toxicity associated with the formation of D-aminoacyl-tRNA entities in vivo and helps enforce protein L-homochirality. The protein is D-aminoacyl-tRNA deacylase of Salmonella paratyphi A (strain AKU_12601).